Reading from the N-terminus, the 322-residue chain is Serine/threonine-protein phosphatase PP1-2 (322 aa).

Positions 60, 62, 88, and 120 each coordinate Mn(2+). Residue H121 is the Proton donor of the active site. Positions 169 and 244 each coordinate Mn(2+). The interval 298 to 322 (RQRVSQSSIKESKSATNSLKKSKNN) is disordered. Residues 301–316 (VSQSSIKESKSATNSL) show a composition bias toward polar residues.

The protein belongs to the PPP phosphatase family. PP-1 subfamily. Mn(2+) is required as a cofactor.

The enzyme catalyses O-phospho-L-seryl-[protein] + H2O = L-seryl-[protein] + phosphate. The catalysed reaction is O-phospho-L-threonyl-[protein] + H2O = L-threonyl-[protein] + phosphate. Functionally, essential role in cell cycle control. PP1 is perhaps required for exit from mitosis. The polypeptide is Serine/threonine-protein phosphatase PP1-2 (sds21) (Schizosaccharomyces pombe (strain 972 / ATCC 24843) (Fission yeast)).